The primary structure comprises 185 residues: Large ribosomal subunit protein uL22 (185 aa).

The protein belongs to the universal ribosomal protein uL22 family. Component of the large ribosomal subunit. Mature ribosomes consist of a small (40S) and a large (60S) subunit. The 40S subunit contains about 32 different proteins and 1 molecule of RNA (18S). The 60S subunit contains 45 different proteins and 3 molecules of RNA (25S, 5.8S and 5S).

Its subcellular location is the cytoplasm. In terms of biological role, component of the ribosome, a large ribonucleoprotein complex responsible for the synthesis of proteins in the cell. The small ribosomal subunit (SSU) binds messenger RNAs (mRNAs) and translates the encoded message by selecting cognate aminoacyl-transfer RNA (tRNA) molecules. The large subunit (LSU) contains the ribosomal catalytic site termed the peptidyl transferase center (PTC), which catalyzes the formation of peptide bonds, thereby polymerizing the amino acids delivered by tRNAs into a polypeptide chain. The nascent polypeptides leave the ribosome through a tunnel in the LSU and interact with protein factors that function in enzymatic processing, targeting, and the membrane insertion of nascent chains at the exit of the ribosomal tunnel. The chain is Large ribosomal subunit protein uL22 from Candida albicans (strain SC5314 / ATCC MYA-2876) (Yeast).